A 257-amino-acid polypeptide reads, in one-letter code: Imidazole glycerol phosphate synthase subunit HisF (257 aa).

Catalysis depends on residues Asp-11 and Asp-130.

It belongs to the HisA/HisF family. In terms of assembly, heterodimer of HisH and HisF.

It localises to the cytoplasm. The enzyme catalyses 5-[(5-phospho-1-deoxy-D-ribulos-1-ylimino)methylamino]-1-(5-phospho-beta-D-ribosyl)imidazole-4-carboxamide + L-glutamine = D-erythro-1-(imidazol-4-yl)glycerol 3-phosphate + 5-amino-1-(5-phospho-beta-D-ribosyl)imidazole-4-carboxamide + L-glutamate + H(+). The protein operates within amino-acid biosynthesis; L-histidine biosynthesis; L-histidine from 5-phospho-alpha-D-ribose 1-diphosphate: step 5/9. Its function is as follows. IGPS catalyzes the conversion of PRFAR and glutamine to IGP, AICAR and glutamate. The HisF subunit catalyzes the cyclization activity that produces IGP and AICAR from PRFAR using the ammonia provided by the HisH subunit. The polypeptide is Imidazole glycerol phosphate synthase subunit HisF (Shewanella woodyi (strain ATCC 51908 / MS32)).